Here is an 83-residue protein sequence, read N- to C-terminus: Calsensin (83 aa).

2 EF-hand domains span residues 4–39 (KVKAELEAAFKKLDANGDGYVTALELQTFMVTLDAY) and 46–81 (KVKEASAKLIKMADKNSDGKISKEEFLNANAELLCQ). Residues Asp-17, Asn-19, Asp-21, Tyr-23, Glu-28, Asp-59, Asn-61, Asp-63, Lys-65, and Glu-70 each contribute to the Ca(2+) site.

Selectively expressed in a small group of neurons.

It is found in the cytoplasm. In terms of biological role, may function as a trigger protein which interacts with a larger protein. May mediate calcium-dependent signal transduction events in the growth cones and axons of a small group of sensory neurons which fasciculate in a single axon tract. In Haemopis marmorata (Green horse leech), this protein is Calsensin.